The primary structure comprises 157 residues: Probable succinate transporter subunit YjjB (157 aa).

Transmembrane regions (helical) follow at residues 6-26 (IILTLIEDMILAAIPAVGFAM), 51-71 (VLMISGMNIEWASFCAAILVG), 87-107 (VFTVAAIIPMFPGINAYVAMI), and 129-149 (FLKASFIVGALSIGLSLPGLW).

This sequence belongs to the ThrE exporter (TC 2.A.79) family. In terms of assembly, the transporter is composed of YjjB and YjjP.

It localises to the cell inner membrane. Its function is as follows. Involved in succinate export with YjjP. Both proteins are required for export. In Proteus mirabilis (strain HI4320), this protein is Probable succinate transporter subunit YjjB.